The following is a 393-amino-acid chain: Probable acetyl-CoA acyltransferase (393 aa).

Cys88 acts as the Acyl-thioester intermediate in catalysis. Residues His349 and Cys378 each act as proton acceptor in the active site.

Belongs to the thiolase-like superfamily. Thiolase family.

It localises to the cytoplasm. The enzyme catalyses 2 acetyl-CoA = acetoacetyl-CoA + CoA. The chain is Probable acetyl-CoA acyltransferase from Staphylococcus aureus (strain MSSA476).